The primary structure comprises 37 residues: Cytochrome b6-f complex subunit 5 (37 aa).

The helical transmembrane segment at L5 to A25 threads the bilayer.

This sequence belongs to the PetG family. In terms of assembly, the 4 large subunits of the cytochrome b6-f complex are cytochrome b6, subunit IV (17 kDa polypeptide, PetD), cytochrome f and the Rieske protein, while the 4 small subunits are PetG, PetL, PetM and PetN. The complex functions as a dimer.

The protein localises to the cellular thylakoid membrane. Component of the cytochrome b6-f complex, which mediates electron transfer between photosystem II (PSII) and photosystem I (PSI), cyclic electron flow around PSI, and state transitions. PetG is required for either the stability or assembly of the cytochrome b6-f complex. The sequence is that of Cytochrome b6-f complex subunit 5 from Trichodesmium erythraeum (strain IMS101).